Reading from the N-terminus, the 372-residue chain is NAD(P)H-quinone oxidoreductase subunit 1 (372 aa).

9 helical membrane passes run 27-47 (LLWLPLPMLMMLIVATVGVLV), 65-85 (PEYIGPLGILAPLADGLKLIF), 97-117 (WLFTLGPAVVVIPVFLSYIIV), 128-148 (LAMGVFLWIALSSIAPIGLLM), 176-196 (LALAVLAVAMMSNGLGTVEIV), 204-224 (ILSWNVWRQPIGFLVFWIAAL), 254-274 (FALFYLGAYVNLVLSALLVSV), 308-328 (VLGITMTLIKAYFFVFLAILL), and 347-367 (FLLPVGLVNLLLTAGLKLAFP).

This sequence belongs to the complex I subunit 1 family. In terms of assembly, NDH-1 is composed of at least 11 different subunits.

It is found in the cellular thylakoid membrane. The enzyme catalyses a plastoquinone + NADH + (n+1) H(+)(in) = a plastoquinol + NAD(+) + n H(+)(out). It carries out the reaction a plastoquinone + NADPH + (n+1) H(+)(in) = a plastoquinol + NADP(+) + n H(+)(out). In terms of biological role, NDH-1 shuttles electrons from an unknown electron donor, via FMN and iron-sulfur (Fe-S) centers, to quinones in the respiratory and/or the photosynthetic chain. The immediate electron acceptor for the enzyme in this species is believed to be plastoquinone. Couples the redox reaction to proton translocation, and thus conserves the redox energy in a proton gradient. This chain is NAD(P)H-quinone oxidoreductase subunit 1, found in Thermosynechococcus vestitus (strain NIES-2133 / IAM M-273 / BP-1).